We begin with the raw amino-acid sequence, 142 residues long: Secreted acidic protein 1B (142 aa).

Composition is skewed to acidic residues over residues 1 to 47 (SDDE…DDNE) and 54 to 64 (TNDDVDYGDGN). The interval 1-74 (SDDESGDDEN…DEAREIGDHS (74 aa)) is disordered. The Extracellular segment spans residues 1 to 123 (SDDESGDDEN…YLRSGGSHFK (123 aa)). Positions 65 to 74 (DEAREIGDHS) are enriched in basic and acidic residues. Residues 124–141 (GQLLNITLGLGFCILFLL) form a helical membrane-spanning segment. Leucine 142 is a topological domain (cytoplasmic).

In terms of tissue distribution, component of the acid-insoluble and acid-soluble organic matrix of the aragonitic skeleton (at protein level).

It is found in the membrane. This chain is Secreted acidic protein 1B, found in Acropora millepora (Staghorn coral).